The primary structure comprises 230 residues: L-aspartate/glutamate-specific racemase (230 aa).

Residues Met-10, Gln-52, and 83–85 (TNT) each bind substrate. Residue Thr-83 is the Proton donor of the active site. Cys-197 serves as the catalytic Proton acceptor. 198–199 (TE) contributes to the substrate binding site.

This sequence belongs to the aspartate/glutamate racemases family. As to quaternary structure, homodimer.

It catalyses the reaction L-glutamate = D-glutamate. The catalysed reaction is L-aspartate = D-aspartate. Exhibits racemase activity for both L-glutamate and L-aspartate. The polypeptide is L-aspartate/glutamate-specific racemase (Escherichia coli O157:H7).